A 59-amino-acid polypeptide reads, in one-letter code: Putative potassium channel toxin Ts22 (59 aa).

The signal sequence occupies residues 1–22 (MKAFYGILIIFILISMIDLSQQ). Cystine bridges form between C29–C50, C35–C55, and C39–C57.

The protein belongs to the short scorpion toxin superfamily. Potassium channel inhibitor family. Alpha-KTx 04 subfamily. Expressed by the venom gland.

Its subcellular location is the secreted. Functionally, potently blocks voltage-gated potassium channels (Kv). This chain is Putative potassium channel toxin Ts22, found in Tityus serrulatus (Brazilian scorpion).